Consider the following 419-residue polypeptide: Tyrosine--tRNA ligase (419 aa).

Y34 is an L-tyrosine binding site. The 'HIGH' region motif lies at 39–48 (PSGDSMHIGH). L-tyrosine contacts are provided by Y168 and Q172. The short motif at 230 to 234 (KFGKS) is the 'KMSKS' region element. K233 provides a ligand contact to ATP. In terms of domain architecture, S4 RNA-binding spans 352 to 418 (VNLVDWLVTL…GKKKYFLVSY (67 aa)).

Belongs to the class-I aminoacyl-tRNA synthetase family. TyrS type 1 subfamily. As to quaternary structure, homodimer.

It localises to the cytoplasm. It carries out the reaction tRNA(Tyr) + L-tyrosine + ATP = L-tyrosyl-tRNA(Tyr) + AMP + diphosphate + H(+). In terms of biological role, catalyzes the attachment of tyrosine to tRNA(Tyr) in a two-step reaction: tyrosine is first activated by ATP to form Tyr-AMP and then transferred to the acceptor end of tRNA(Tyr). This is Tyrosine--tRNA ligase from Listeria innocua serovar 6a (strain ATCC BAA-680 / CLIP 11262).